Here is a 443-residue protein sequence, read N- to C-terminus: Thymidine phosphorylase (443 aa).

It belongs to the thymidine/pyrimidine-nucleoside phosphorylase family. Homodimer.

The enzyme catalyses thymidine + phosphate = 2-deoxy-alpha-D-ribose 1-phosphate + thymine. It participates in pyrimidine metabolism; dTMP biosynthesis via salvage pathway; dTMP from thymine: step 1/2. In terms of biological role, the enzymes which catalyze the reversible phosphorolysis of pyrimidine nucleosides are involved in the degradation of these compounds and in their utilization as carbon and energy sources, or in the rescue of pyrimidine bases for nucleotide synthesis. The protein is Thymidine phosphorylase of Aliivibrio fischeri (strain ATCC 700601 / ES114) (Vibrio fischeri).